The following is a 150-amino-acid chain: UPF0756 membrane protein Dd703_1075 (150 aa).

Transmembrane regions (helical) follow at residues 8–28 (LLILLVLAVLGIVSHNMTITL), 51–71 (YGLSFGILVLTIGVLAPIASG), 81–101 (AFLNWKSLLAVIIGIAVSWLG), and 114–134 (VVAGLLVGTVIGVALLRGVPV).

Belongs to the UPF0756 family.

The protein localises to the cell membrane. The polypeptide is UPF0756 membrane protein Dd703_1075 (Musicola paradisiaca (strain Ech703) (Dickeya paradisiaca)).